We begin with the raw amino-acid sequence, 243 residues long: Biosynthetic peptidoglycan transglycosylase (243 aa).

A helical membrane pass occupies residues 21–43; it reads LLIVSLVSALMSVLQVIVFRFVD.

The protein belongs to the glycosyltransferase 51 family.

Its subcellular location is the cell inner membrane. The enzyme catalyses [GlcNAc-(1-&gt;4)-Mur2Ac(oyl-L-Ala-gamma-D-Glu-L-Lys-D-Ala-D-Ala)](n)-di-trans,octa-cis-undecaprenyl diphosphate + beta-D-GlcNAc-(1-&gt;4)-Mur2Ac(oyl-L-Ala-gamma-D-Glu-L-Lys-D-Ala-D-Ala)-di-trans,octa-cis-undecaprenyl diphosphate = [GlcNAc-(1-&gt;4)-Mur2Ac(oyl-L-Ala-gamma-D-Glu-L-Lys-D-Ala-D-Ala)](n+1)-di-trans,octa-cis-undecaprenyl diphosphate + di-trans,octa-cis-undecaprenyl diphosphate + H(+). The protein operates within cell wall biogenesis; peptidoglycan biosynthesis. In terms of biological role, peptidoglycan polymerase that catalyzes glycan chain elongation from lipid-linked precursors. This chain is Biosynthetic peptidoglycan transglycosylase, found in Xylella fastidiosa (strain M12).